Reading from the N-terminus, the 211-residue chain is ATP phosphoribosyltransferase (211 aa).

This sequence belongs to the ATP phosphoribosyltransferase family. Short subfamily. As to quaternary structure, heteromultimer composed of HisG and HisZ subunits.

The protein localises to the cytoplasm. The enzyme catalyses 1-(5-phospho-beta-D-ribosyl)-ATP + diphosphate = 5-phospho-alpha-D-ribose 1-diphosphate + ATP. It functions in the pathway amino-acid biosynthesis; L-histidine biosynthesis; L-histidine from 5-phospho-alpha-D-ribose 1-diphosphate: step 1/9. Catalyzes the condensation of ATP and 5-phosphoribose 1-diphosphate to form N'-(5'-phosphoribosyl)-ATP (PR-ATP). Has a crucial role in the pathway because the rate of histidine biosynthesis seems to be controlled primarily by regulation of HisG enzymatic activity. In Pseudomonas syringae pv. tomato (strain ATCC BAA-871 / DC3000), this protein is ATP phosphoribosyltransferase.